We begin with the raw amino-acid sequence, 315 residues long: Fructose-1,6-bisphosphatase class 1 (315 aa).

Positions 90, 111, 113, and 114 each coordinate Mg(2+). Residues 114–117 (DGSS), Tyr-222, and Lys-253 contribute to the substrate site. Mg(2+) is bound at residue Glu-259.

This sequence belongs to the FBPase class 1 family. Homotetramer. Requires Mg(2+) as cofactor.

The protein localises to the cytoplasm. It catalyses the reaction beta-D-fructose 1,6-bisphosphate + H2O = beta-D-fructose 6-phosphate + phosphate. The protein operates within carbohydrate biosynthesis; gluconeogenesis. The protein is Fructose-1,6-bisphosphatase class 1 of Trichlorobacter lovleyi (strain ATCC BAA-1151 / DSM 17278 / SZ) (Geobacter lovleyi).